Consider the following 341-residue polypeptide: Glycerol-3-phosphate dehydrogenase [NAD(P)+] (341 aa).

NADPH contacts are provided by serine 15, tryptophan 16, arginine 36, and lysine 110. Sn-glycerol 3-phosphate contacts are provided by lysine 110, glycine 139, and serine 141. Residue alanine 143 coordinates NADPH. Sn-glycerol 3-phosphate-binding residues include lysine 194, aspartate 247, serine 257, arginine 258, and asparagine 259. The Proton acceptor role is filled by lysine 194. Position 258 (arginine 258) interacts with NADPH. NADPH contacts are provided by valine 282 and glutamate 284.

Belongs to the NAD-dependent glycerol-3-phosphate dehydrogenase family.

It is found in the cytoplasm. It catalyses the reaction sn-glycerol 3-phosphate + NAD(+) = dihydroxyacetone phosphate + NADH + H(+). The catalysed reaction is sn-glycerol 3-phosphate + NADP(+) = dihydroxyacetone phosphate + NADPH + H(+). It functions in the pathway membrane lipid metabolism; glycerophospholipid metabolism. Functionally, catalyzes the reduction of the glycolytic intermediate dihydroxyacetone phosphate (DHAP) to sn-glycerol 3-phosphate (G3P), the key precursor for phospholipid synthesis. This chain is Glycerol-3-phosphate dehydrogenase [NAD(P)+], found in Xanthomonas campestris pv. campestris (strain 8004).